The primary structure comprises 176 residues: MVQVELDVQDCFLESSPEAAQASGYIDSQVSSATWEDWFHRWLEILDSSLPPAPSYEIGLRLTDDTEIQAINAQYRQQNKPTDVLAFAALEADLPQNPEMVAEPLYLGDIVVSINTAQRQAGQQEHSLSTELAWLTAHGLLHLLGWDHPDEESLIAMLQQQVVLLDAVGIKININY.

Positions 138, 142, and 148 each coordinate Zn(2+).

It belongs to the endoribonuclease YbeY family. Zn(2+) is required as a cofactor.

It is found in the cytoplasm. Its function is as follows. Single strand-specific metallo-endoribonuclease involved in late-stage 70S ribosome quality control and in maturation of the 3' terminus of the 16S rRNA. The chain is Endoribonuclease YbeY from Trichormus variabilis (strain ATCC 29413 / PCC 7937) (Anabaena variabilis).